A 144-amino-acid chain; its full sequence is MTIERTLSIIKPNAIKNNALGTIIHRFISANFNIIGMKMLHLTKAQAKGFYTEHQHKSFFNDLINFMISGPIVVLVLESPDAIRRNRDIIGATNPVDAIAGTLRADYADSLIENAVHGSDSLTAAMREINYFFLAGEVYGSMYQ.

6 residues coordinate ATP: Lys-11, Phe-59, Arg-87, Thr-93, Arg-104, and Asn-114. His-117 functions as the Pros-phosphohistidine intermediate in the catalytic mechanism.

It belongs to the NDK family. As to quaternary structure, homotetramer. Mg(2+) is required as a cofactor.

The protein localises to the cytoplasm. It catalyses the reaction a 2'-deoxyribonucleoside 5'-diphosphate + ATP = a 2'-deoxyribonucleoside 5'-triphosphate + ADP. The enzyme catalyses a ribonucleoside 5'-diphosphate + ATP = a ribonucleoside 5'-triphosphate + ADP. Functionally, major role in the synthesis of nucleoside triphosphates other than ATP. The ATP gamma phosphate is transferred to the NDP beta phosphate via a ping-pong mechanism, using a phosphorylated active-site intermediate. The chain is Nucleoside diphosphate kinase from Baumannia cicadellinicola subsp. Homalodisca coagulata.